The chain runs to 436 residues: Probable G-protein coupled receptor C06G4.5 (436 aa).

The Extracellular portion of the chain corresponds to methionine 1–histidine 53. Residue asparagine 15 is glycosylated (N-linked (GlcNAc...) asparagine). The helical transmembrane segment at valine 54–alanine 74 threads the bilayer. Residues valine 75–leucine 94 are Cytoplasmic-facing. The helical transmembrane segment at isoleucine 95–valine 115 threads the bilayer. Residues isoleucine 116–leucine 132 are Extracellular-facing. A helical transmembrane segment spans residues histidine 133–phenylalanine 153. At aspartate 154–asparagine 171 the chain is on the cytoplasmic side. Residues phenylalanine 172 to leucine 192 form a helical membrane-spanning segment. At tryptophan 193–threonine 230 the chain is on the extracellular side. The chain crosses the membrane as a helical span at residues alanine 231–phenylalanine 251. At tyrosine 252–leucine 281 the chain is on the cytoplasmic side. The helical transmembrane segment at alanine 282–valine 302 threads the bilayer. Topologically, residues tyrosine 303–valine 316 are extracellular. Asparagine 309 carries N-linked (GlcNAc...) asparagine glycosylation. Residues phenylalanine 317–isoleucine 337 form a helical membrane-spanning segment. Residues leucine 338–leucine 436 lie on the Cytoplasmic side of the membrane.

The protein belongs to the G-protein coupled receptor 1 family.

It localises to the cell membrane. In terms of biological role, putative receptor. The protein is Probable G-protein coupled receptor C06G4.5 of Caenorhabditis elegans.